Here is a 367-residue protein sequence, read N- to C-terminus: NADH-quinone oxidoreductase subunit H (367 aa).

The next 8 helical transmembrane spans lie at 18-38 (VLLF…VAYL), 87-107 (LCFL…WAVI), 132-152 (IGVL…IIAG), 180-200 (LTIV…IVIA), 204-224 (MPYW…ISAL), 257-277 (FFLG…IFFF), 291-311 (IIPG…CFIW), and 328-348 (GWKV…GILV).

It belongs to the complex I subunit 1 family. As to quaternary structure, NDH-1 is composed of 14 different subunits. Subunits NuoA, H, J, K, L, M, N constitute the membrane sector of the complex.

The protein resides in the cell inner membrane. It carries out the reaction a quinone + NADH + 5 H(+)(in) = a quinol + NAD(+) + 4 H(+)(out). Its function is as follows. NDH-1 shuttles electrons from NADH, via FMN and iron-sulfur (Fe-S) centers, to quinones in the respiratory chain. The immediate electron acceptor for the enzyme in this species is believed to be ubiquinone. Couples the redox reaction to proton translocation (for every two electrons transferred, four hydrogen ions are translocated across the cytoplasmic membrane), and thus conserves the redox energy in a proton gradient. This subunit may bind ubiquinone. The chain is NADH-quinone oxidoreductase subunit H from Ehrlichia ruminantium (strain Gardel).